A 293-amino-acid polypeptide reads, in one-letter code: uncharacterized protein (293 aa).

This is an uncharacterized protein from Treponema pallidum (strain Nichols).